The sequence spans 287 residues: Coatomer subunit epsilon-1 (287 aa).

It belongs to the COPE family. In terms of assembly, oligomeric complex that consists of at least the alpha, beta, beta', gamma, delta, epsilon and zeta subunits.

It is found in the cytoplasm. Its subcellular location is the golgi apparatus membrane. It localises to the cytoplasmic vesicle. The protein resides in the COPI-coated vesicle membrane. Its function is as follows. The coatomer is a cytosolic protein complex that binds to dilysine motifs and reversibly associates with Golgi non-clathrin-coated vesicles, which further mediate biosynthetic protein transport from the ER, via the Golgi up to the trans Golgi network. The coatomer complex is required for budding from Golgi membranes, and is essential for the retrograde Golgi-to-ER transport of dilysine-tagged proteins. In Oryza sativa subsp. japonica (Rice), this protein is Coatomer subunit epsilon-1 (COPE1).